The chain runs to 332 residues: RNA polymerase principal sigma factor HrdD (332 aa).

Positions 1-21 (MATRAVARRQPAASGETGAAG) are disordered. The short motif at 124 to 137 (DLIQEGNAGLVRAV) is the Polymerase core binding element. Positions 294–313 (LTEVGKQHGLTRERIRQIEK) form a DNA-binding region, H-T-H motif.

The protein belongs to the sigma-70 factor family.

Sigma factors are initiation factors that promote the attachment of RNA polymerase to specific initiation sites and are then released. In Streptomyces griseus, this protein is RNA polymerase principal sigma factor HrdD (hrdD).